The chain runs to 71 residues: UPF0337 protein PPA1427 (71 aa).

The interval 20 to 46 (EKIGGLTDDSDLKSAGADQKASGKVAQ) is disordered.

This sequence belongs to the UPF0337 (CsbD) family.

This Cutibacterium acnes (strain DSM 16379 / KPA171202) (Propionibacterium acnes) protein is UPF0337 protein PPA1427.